A 168-amino-acid polypeptide reads, in one-letter code: Transmembrane protein 31 (168 aa).

Positions 1–11 are enriched in basic and acidic residues; the sequence is MRLTEKSEGEQ. The segment at 1-63 is disordered; that stretch reads MRLTEKSEGE…LPSRRTPTTS (63 aa). Composition is skewed to polar residues over residues 13 to 22 and 35 to 48; these read LKPNNSNAPN and HTPARQRTQRADTQ. The span at 49 to 63 shows a compositional bias: low complexity; it reads PSRCRLPSRRTPTTS. The next 2 helical transmembrane spans lie at 119-139 and 148-168; these read IGLPIILHLFALSTLYFYKFF and FFILLVLLLLLFIIVFILIFF.

The protein localises to the membrane. In Homo sapiens (Human), this protein is Transmembrane protein 31 (TMEM31).